The primary structure comprises 49 residues: Putative DNA-directed RNA polymerase subunit omega (49 aa).

Belongs to the RNA polymerase subunit omega family.

Its subcellular location is the plastid. It localises to the chloroplast. The catalysed reaction is RNA(n) + a ribonucleoside 5'-triphosphate = RNA(n+1) + diphosphate. In terms of biological role, may be involved in RNA polymerase activity. In Cyanidioschyzon merolae (strain NIES-3377 / 10D) (Unicellular red alga), this protein is Putative DNA-directed RNA polymerase subunit omega (rpoZ).